Reading from the N-terminus, the 349-residue chain is tRNA pseudouridine synthase D (349 aa).

F27 lines the substrate pocket. D80 (nucleophile) is an active-site residue. Position 129 (N129) interacts with substrate. The TRUD domain maps to 155 to 303 (GVPNYFGAQR…VEAARRAMLL (149 aa)). Position 329 (F329) interacts with substrate.

It belongs to the pseudouridine synthase TruD family.

It catalyses the reaction uridine(13) in tRNA = pseudouridine(13) in tRNA. In terms of biological role, responsible for synthesis of pseudouridine from uracil-13 in transfer RNAs. This is tRNA pseudouridine synthase D from Escherichia coli (strain K12 / MC4100 / BW2952).